An 886-amino-acid polypeptide reads, in one-letter code: Adhesion G protein-coupled receptor E1 (886 aa).

The first 20 residues, 1 to 20, serve as a signal peptide directing secretion; sequence MRGFNLLLFWGCCVMHSWEG. At 21 to 599 the chain is on the extracellular side; the sequence is HIRPTRKPNT…IMASGELTMD (579 aa). Positions 31–79 constitute an EGF-like 1 domain; that stretch reads KGNNCRDSTLCPAYATCTNTVDSYYCACKQGFLSSNGQNHFKDPGVRCK. Disulfide bonds link Cys35/Cys47, Cys41/Cys56, Cys58/Cys78, Cys84/Cys97, Cys91/Cys106, Cys108/Cys130, Cys136/Cys148, Cys142/Cys157, Cys159/Cys170, Cys176/Cys188, Cys182/Cys197, Cys199/Cys219, Cys225/Cys235, Cys229/Cys244, Cys246/Cys266, Cys272/Cys285, Cys279/Cys294, and Cys296/Cys315. Residues 80–131 form the EGF-like 2; calcium-binding domain; it reads DIDECSQSPQPCGPNSSCKNLSGRYKCSCLDGFSSPTGNDWVPGKPGNFSCT. N-linked (GlcNAc...) asparagine glycosylation is found at Asn94, Asn99, and Asn127. The EGF-like 3; calcium-binding domain maps to 132–171; sequence DINECLTSSVCPEHSDCVNSMGSYSCSCQVGFISRNSTCE. A glycan (N-linked (GlcNAc...) asparagine) is linked at Asn167. An EGF-like 4; calcium-binding domain is found at 172-220; the sequence is DVDECADPRACPEHATCNNTVGNYSCFCNPGFESSSGHLSFQGLKASCE. N-linked (GlcNAc...) asparagine glycosylation is found at Asn189 and Asn194. Residues 221-267 enclose the EGF-like 5; calcium-binding domain; that stretch reads DIDECTEMCPINSTCTNTPGSYFCTCHPGFAPSNGQLNFTDQGVECR. 2 N-linked (GlcNAc...) asparagine glycosylation sites follow: Asn232 and Asn258. Residues 268-316 form the EGF-like 6; calcium-binding domain; the sequence is DIDECRQDPSTCGPNSICTNALGSYSCGCIAGFHPNPEGSQKDGNFSCQ. Residues Asn312, Asn366, Asn375, and Asn448 are each glycosylated (N-linked (GlcNAc...) asparagine). One can recognise a GAIN-B domain in the interval 431-597; that stretch reads EYLDIESKVI…AVIMASGELT (167 aa). Intrachain disulfides connect Cys550-Cys579 and Cys567-Cys581. Residues 550-597 form a GPS region; that stretch reads CVSWSTDVKGGRWTSFGCVILEASETYTICSCNQMANLAVIMASGELT. The chain crosses the membrane as a helical span at residues 600–627; it reads FSLYIISHVGIIISLVCLVLAIATFLLC. The Cytoplasmic portion of the chain corresponds to 628-634; sequence RSIRNHN. A helical membrane pass occupies residues 635 to 656; it reads TYLHLHLCVCLLLAKTLFLAGI. Residues 657–666 are Extracellular-facing; sequence HKTDNKMGCA. The chain crosses the membrane as a helical span at residues 667–690; it reads IIAGFLHYLFLACFFWMLVEAVIL. Residues 691-709 are Cytoplasmic-facing; sequence FLMVRNLKVVNYFSSRNIK. Residues 710 to 731 form a helical membrane-spanning segment; it reads MLHICAFGYGLPMLVVVISASV. The Extracellular segment spans residues 732-747; it reads QPQGYGMHNRCWLNTE. The helical transmembrane segment at 748 to 776 threads the bilayer; that stretch reads TGFIWSFLGPVCTVIVINSLLLTWTLWIL. Residues 777-794 are Cytoplasmic-facing; sequence RQRLSSVNAEVSTLKDTR. A helical transmembrane segment spans residues 795–814; that stretch reads LLTFKAFAQLFILGCSWVLG. The Extracellular segment spans residues 815–829; it reads IFQIGPVAGVMAYLF. Residues 830–852 traverse the membrane as a helical segment; the sequence is TIINSLQGAFIFLIHCLLNGQVR. Over 853–886 the chain is Cytoplasmic; sequence EEYKRWITGKTKPSSQSQTSRILLSSMPSASKTG. The tract at residues 862-886 is disordered; that stretch reads KTKPSSQSQTSRILLSSMPSASKTG. A compositionally biased stretch (polar residues) spans 863–886; sequence TKPSSQSQTSRILLSSMPSASKTG.

Belongs to the G-protein coupled receptor 2 family. Adhesion G-protein coupled receptor (ADGR) subfamily. As to expression, expression is restricted to eosinophils.

Its subcellular location is the cell membrane. Functionally, orphan receptor involved in cell adhesion and probably in cell-cell interactions specifically involving cells of the immune system. May play a role in regulatory T-cells (Treg) development. This chain is Adhesion G protein-coupled receptor E1, found in Homo sapiens (Human).